Consider the following 204-residue polypeptide: Small ribosomal subunit protein uS7 (204 aa).

N-acetylmethionine is present on M1. T2 carries the post-translational modification N-acetylthreonine; in 40S ribosomal protein S5, N-terminally processed. A Phosphothreonine modification is found at T14. Position 47 is an N6-acetyllysine; alternate (K47). K47 participates in a covalent cross-link: Glycyl lysine isopeptide (Lys-Gly) (interchain with G-Cter in SUMO2); alternate. Phosphoserine is present on S142.

This sequence belongs to the universal ribosomal protein uS7 family. As to quaternary structure, component of the small ribosomal subunit. Part of the small subunit (SSU) processome, composed of more than 70 proteins and the RNA chaperone small nucleolar RNA (snoRNA) U3.

It localises to the cytoplasm. The protein localises to the nucleus. It is found in the nucleolus. Its function is as follows. Component of the small ribosomal subunit. The ribosome is a large ribonucleoprotein complex responsible for the synthesis of proteins in the cell. Part of the small subunit (SSU) processome, first precursor of the small eukaryotic ribosomal subunit. During the assembly of the SSU processome in the nucleolus, many ribosome biogenesis factors, an RNA chaperone and ribosomal proteins associate with the nascent pre-rRNA and work in concert to generate RNA folding, modifications, rearrangements and cleavage as well as targeted degradation of pre-ribosomal RNA by the RNA exosome. This is Small ribosomal subunit protein uS7 (Rps5) from Mus musculus (Mouse).